Here is a 385-residue protein sequence, read N- to C-terminus: Cytochrome b (385 aa).

Transmembrane regions (helical) follow at residues 32-52 (LGSLLGLCLVIQILTGIFMAM), 76-98 (WLLRYMHANGASFFFICMYMHIA), 113-133 (VWIVGVIIFVLTMAAAFLGYC), and 179-199 (FFALHYLVPFIIAALVVMHFM). Heme b-binding residues include His-82 and His-96. Positions 183 and 197 each coordinate heme b. His-202 contributes to the a ubiquinone binding site. The next 4 membrane-spanning stretches (helical) occupy residues 225 to 245 (FIFKDLITVFVFLIFFSLFVF), 289 to 309 (LLGVITMFAAILVLLVLPITD), 321 to 341 (LSKFFFFLFIFNFLLLGQIGQ), and 348 to 368 (FVLMGQIATFLYFAYFIIIVP).

Belongs to the cytochrome b family. As to quaternary structure, fungal cytochrome b-c1 complex contains 10 subunits; 3 respiratory subunits, 2 core proteins and 5 low-molecular weight proteins. Cytochrome b-c1 complex is a homodimer. The cofactor is heme b.

Its subcellular location is the mitochondrion inner membrane. Component of the ubiquinol-cytochrome c reductase complex (complex III or cytochrome b-c1 complex) that is part of the mitochondrial respiratory chain. The b-c1 complex mediates electron transfer from ubiquinol to cytochrome c. Contributes to the generation of a proton gradient across the mitochondrial membrane that is then used for ATP synthesis. The protein is Cytochrome b (COB) of Candida glabrata (strain ATCC 2001 / BCRC 20586 / JCM 3761 / NBRC 0622 / NRRL Y-65 / CBS 138) (Yeast).